A 247-amino-acid chain; its full sequence is Granzyme B(G,H) (247 aa).

The first 18 residues, 1-18 (MKILLLLLTLSLASRTKA), serve as a signal peptide directing secretion. A propeptide spans 19-20 (GE) (activation peptide). The Peptidase S1 domain maps to 21 to 245 (IIGGHEVKPH…FLSWIKKTMK (225 aa)). Cys-49 and Cys-65 are disulfide-bonded. The active-site Charge relay system is the His-64. An N-linked (GlcNAc...) asparagine glycan is attached at Asn-71. Asp-108 functions as the Charge relay system in the catalytic mechanism. Cystine bridges form between Cys-142-Cys-209 and Cys-173-Cys-188. Asn-182 is a glycosylation site (N-linked (GlcNAc...) asparagine). Ser-203 serves as the catalytic Charge relay system.

Belongs to the peptidase S1 family. Granzyme subfamily.

Its subcellular location is the secreted. The protein localises to the cytolytic granule. It catalyses the reaction Preferential cleavage: -Asp-|-Xaa- &gt;&gt; -Asn-|-Xaa- &gt; -Met-|-Xaa-, -Ser-|-Xaa-.. Inactivated by the serine protease inhibitor diisopropylfluorophosphate. Abundant protease in the cytosolic granules of cytotoxic T-cells and NK-cells which activates caspase-independent pyroptosis when delivered into the target cell through the immunological synapse. It cleaves after Asp. Once delivered into the target cell, acts by catalyzing cleavage of gasdermin-E (GSDME), releasing the pore-forming moiety of GSDME, thereby triggering pyroptosis and target cell death. Seems to be linked to an activation cascade of caspases (aspartate-specific cysteine proteases) responsible for apoptosis execution. Cleaves caspase-3 and -9 (CASP3 and CASP9, respectively) to give rise to active enzymes mediating apoptosis. Cleaves and activates CASP7 in response to bacterial infection, promoting plasma membrane repair. The protein is Granzyme B(G,H) (Gzmb) of Mus musculus (Mouse).